A 121-amino-acid polypeptide reads, in one-letter code: Large ribosomal subunit protein bL12 (121 aa).

The protein belongs to the bacterial ribosomal protein bL12 family. In terms of assembly, homodimer. Part of the ribosomal stalk of the 50S ribosomal subunit. Forms a multimeric L10(L12)X complex, where L10 forms an elongated spine to which 2 to 4 L12 dimers bind in a sequential fashion. Binds GTP-bound translation factors.

Functionally, forms part of the ribosomal stalk which helps the ribosome interact with GTP-bound translation factors. Is thus essential for accurate translation. The protein is Large ribosomal subunit protein bL12 of Clostridium perfringens (strain 13 / Type A).